The primary structure comprises 398 residues: Diaminopropionate ammonia-lyase (398 aa).

An N6-(pyridoxal phosphate)lysine modification is found at lysine 77.

The protein belongs to the diaminopropionate ammonia-lyase family. In terms of assembly, homodimer. Pyridoxal 5'-phosphate is required as a cofactor.

It carries out the reaction (S)-2,3-diaminopropanoate + H2O + H(+) = pyruvate + 2 NH4(+). It catalyses the reaction (R)-2,3-diaminopropanoate + H2O + H(+) = pyruvate + 2 NH4(+). In terms of biological role, catalyzes the alpha,beta-elimination reaction of both L- and D-alpha,beta-diaminopropionate (DAP) to form pyruvate and ammonia. The D-isomer of serine is degraded to pyruvate, though very poorly; other amino acids (L-serine, D- and L-threonine, D- and L-beta-Cl-alanine) are not substrates. This Escherichia coli O157:H7 protein is Diaminopropionate ammonia-lyase (ygeX).